Consider the following 360-residue polypeptide: MSDLASLETSILDQIAAAGDEAALEAVRVAALGKKGSISALLATLGKMSPDERKTQGAAINLAKDKVTQALSARRDVLKAAALDARLAAETIDVTLPLQDTPADTGRIHPLSQVMDELTTIFADMGFSIAEGPDVETDDYNFTKLNFPEGHPAREMHDTFFFNPKEDGSRMLLRTHTSPVQVRTMLSQKPPIRVICPGRTYRIDSDATHTPQFHQVEGLVIDKGSHLGHLKWILHEFCKAFFEVDHINMKFRPSFFPFTEPSLEVDIQCRRDKGEIRFGEGEDWLEILGCGMVHPNVLRACGIDPDEYQGFAWGMGIDRIAMLKYGMSDLRQLFEGDVRWLSHYGFKPLEVPTLAGGLST.

Glu-260 is a binding site for Mg(2+).

It belongs to the class-II aminoacyl-tRNA synthetase family. Phe-tRNA synthetase alpha subunit type 1 subfamily. In terms of assembly, tetramer of two alpha and two beta subunits. Requires Mg(2+) as cofactor.

It localises to the cytoplasm. It catalyses the reaction tRNA(Phe) + L-phenylalanine + ATP = L-phenylalanyl-tRNA(Phe) + AMP + diphosphate + H(+). The protein is Phenylalanine--tRNA ligase alpha subunit of Bradyrhizobium sp. (strain ORS 278).